Reading from the N-terminus, the 61-residue chain is Large ribosomal subunit protein uL30 (61 aa).

Belongs to the universal ribosomal protein uL30 family. In terms of assembly, part of the 50S ribosomal subunit.

The chain is Large ribosomal subunit protein uL30 from Bifidobacterium adolescentis (strain ATCC 15703 / DSM 20083 / NCTC 11814 / E194a).